The primary structure comprises 24 residues: RuBisCO large subunit-binding protein subunit beta, chloroplastic (24 aa).

This sequence belongs to the chaperonin (HSP60) family. Oligomer of probably six alpha and six beta subunits.

The protein resides in the plastid. Its subcellular location is the chloroplast. Functionally, this protein binds RuBisCO small and large subunits and is implicated in the assembly of the enzyme oligomer. This is RuBisCO large subunit-binding protein subunit beta, chloroplastic from Populus euphratica (Euphrates poplar).